The sequence spans 257 residues: Triosephosphate isomerase (257 aa).

Positions 11 and 13 each coordinate substrate. The active-site Electrophile is histidine 96. Glutamate 170 (proton acceptor) is an active-site residue.

It belongs to the triosephosphate isomerase family. In terms of assembly, homodimer.

It catalyses the reaction D-glyceraldehyde 3-phosphate = dihydroxyacetone phosphate. It participates in carbohydrate biosynthesis; gluconeogenesis. Its pathway is carbohydrate degradation; glycolysis; D-glyceraldehyde 3-phosphate from glycerone phosphate: step 1/1. The protein is Triosephosphate isomerase of Giardia intestinalis (Giardia lamblia).